Consider the following 247-residue polypeptide: Probable transcriptional regulatory protein lpp1249 (247 aa).

This sequence belongs to the TACO1 family.

It localises to the cytoplasm. This is Probable transcriptional regulatory protein lpp1249 from Legionella pneumophila (strain Paris).